A 78-amino-acid chain; its full sequence is MICOS complex subunit MIC10 (78 aa).

Serine 2 bears the N-acetylserine mark. The chain crosses the membrane as a helical span at residues 17 to 36 (AVVKIGTGFGLGIVFSLTFF). At 37–78 (KRRMWPLAFGSGMGLGMAYSNCQHDFQAPYLLHGKYVKEQEQ) the chain is on the mitochondrial intermembrane side.

Belongs to the MICOS complex subunit Mic10 family. In terms of assembly, component of the mitochondrial contact site and cristae organizing system (MICOS) complex, composed of at least MICOS10/MIC10, CHCHD3/MIC19, CHCHD6/MIC25, APOOL/MIC27, IMMT/MIC60, APOO/MIC23/MIC26 and MICOS13/MIC13. This complex was also known under the names MINOS or MitOS complex. The MICOS complex associates with mitochondrial outer membrane proteins SAMM50, MTX1 and MTX2 (together described as components of the mitochondrial outer membrane sorting assembly machinery (SAM) complex) and DNAJC11, mitochondrial inner membrane protein TMEM11 and with HSPA9. The MICOS and SAM complexes together with DNAJC11 are part of a large protein complex spanning both membranes termed the mitochondrial intermembrane space bridging (MIB) complex. Interacts with IMMT/MIC60 and MICOS13/MIC13. Interacts with APOO/MIC23/MIC26 and APOOL/MIC27. Interacts with ARMC1.

It is found in the mitochondrion inner membrane. Functionally, component of the MICOS complex, a large protein complex of the mitochondrial inner membrane that plays crucial roles in the maintenance of crista junctions, inner membrane architecture, and formation of contact sites to the outer membrane. This chain is MICOS complex subunit MIC10, found in Homo sapiens (Human).